The chain runs to 497 residues: Glycerol kinase (497 aa).

Threonine 13 is an ADP binding site. Threonine 13, threonine 14, and serine 15 together coordinate ATP. Threonine 13 contributes to the sn-glycerol 3-phosphate binding site. Arginine 17 is an ADP binding site. Sn-glycerol 3-phosphate is bound by residues arginine 83, glutamate 84, and tyrosine 135. Glycerol-binding residues include arginine 83, glutamate 84, and tyrosine 135. Position 231 is a phosphohistidine; by HPr (histidine 231). A sn-glycerol 3-phosphate-binding site is contributed by aspartate 245. Residues aspartate 245 and glutamine 246 each coordinate glycerol. Residues threonine 267 and glycine 310 each contribute to the ADP site. 4 residues coordinate ATP: threonine 267, glycine 310, glutamine 314, and glycine 411. The ADP site is built by glycine 411 and asparagine 415.

It belongs to the FGGY kinase family. As to quaternary structure, homotetramer and homodimer (in equilibrium). The phosphoenolpyruvate-dependent sugar phosphotransferase system (PTS), including enzyme I, and histidine-containing protein (HPr) are required for the phosphorylation, which leads to the activation of the enzyme.

The enzyme catalyses glycerol + ATP = sn-glycerol 3-phosphate + ADP + H(+). The protein operates within polyol metabolism; glycerol degradation via glycerol kinase pathway; sn-glycerol 3-phosphate from glycerol: step 1/1. Activated by phosphorylation and inhibited by fructose 1,6-bisphosphate (FBP). Key enzyme in the regulation of glycerol uptake and metabolism. Catalyzes the phosphorylation of glycerol to yield sn-glycerol 3-phosphate. The protein is Glycerol kinase of Halalkalibacterium halodurans (strain ATCC BAA-125 / DSM 18197 / FERM 7344 / JCM 9153 / C-125) (Bacillus halodurans).